Consider the following 585-residue polypeptide: ATP-dependent lipid A-core flippase (585 aa).

Transmembrane regions (helical) follow at residues 18 to 38 (LWPT…ALVL), 68 to 88 (LMAV…FISS), 142 to 162 (SNAL…LAVM), 163 to 183 (IATS…IAVL), 255 to 275 (PIVQ…ATIP), and 277 to 297 (IMSQ…MLAM). The region spanning 30–313 (IAAAAALVLN…LTNVNSQFQR (284 aa)) is the ABC transmembrane type-1 domain. In terms of domain architecture, ABC transporter spans 345 to 581 (VSFKDVSFTY…NGAYKQLHKM (237 aa)). 379-386 (GRSGSGKS) is a binding site for ATP.

This sequence belongs to the ABC transporter superfamily. Lipid exporter (TC 3.A.1.106) family. Homodimer.

Its subcellular location is the cell inner membrane. It carries out the reaction ATP + H2O + lipid A-core oligosaccharideSide 1 = ADP + phosphate + lipid A-core oligosaccharideSide 2.. Its function is as follows. Involved in lipopolysaccharide (LPS) biosynthesis. Translocates lipid A-core from the inner to the outer leaflet of the inner membrane. Transmembrane domains (TMD) form a pore in the inner membrane and the ATP-binding domain (NBD) is responsible for energy generation. In Mannheimia succiniciproducens (strain KCTC 0769BP / MBEL55E), this protein is ATP-dependent lipid A-core flippase.